The following is a 366-amino-acid chain: MQFSISRENLLKPLQQVCGVLSNRPNIPVLNNVLLQIEDYRLTITGTDLEVELSSQTQLSSSSENGTFTIPAKKFLDICRTLSDDSEITVTFEQDRALVQSGRSRFTLATQPAEEYPNLTDWQSEVDFELPQNTLRRLIEATQFSMANQDARYFLNGMKFETEGNLLRTVATDGHRLAVCTISLEQELQNHSVILPRKGVLELVRLLETNDEPARLQIGTNNLRVHLKNTVFTSKLIDGRFPDYRRVLPRNATKIVEGNWEMLKQAFARASILSNERARSVRLSLKENQLKITASNTEHEEAEEIVDVNYNGEELEVGFNVTYILDVLNALKCNQVRMCLTDAFSSCLIENCEDSSCEYVIMPMRL.

This sequence belongs to the beta sliding clamp family. As to quaternary structure, forms a ring-shaped head-to-tail homodimer around DNA which binds and tethers DNA polymerases and other proteins to the DNA. The DNA replisome complex has a single clamp-loading complex (3 tau and 1 each of delta, delta', psi and chi subunits) which binds 3 Pol III cores (1 core on the leading strand and 2 on the lagging strand) each with a beta sliding clamp dimer. Additional proteins in the replisome are other copies of gamma, psi and chi, Ssb, DNA helicase and RNA primase.

The protein resides in the cytoplasm. Confers DNA tethering and processivity to DNA polymerases and other proteins. Acts as a clamp, forming a ring around DNA (a reaction catalyzed by the clamp-loading complex) which diffuses in an ATP-independent manner freely and bidirectionally along dsDNA. Initially characterized for its ability to contact the catalytic subunit of DNA polymerase III (Pol III), a complex, multichain enzyme responsible for most of the replicative synthesis in bacteria; Pol III exhibits 3'-5' exonuclease proofreading activity. The beta chain is required for initiation of replication as well as for processivity of DNA replication. The sequence is that of Beta sliding clamp (dnaN) from Haemophilus influenzae (strain ATCC 51907 / DSM 11121 / KW20 / Rd).